Consider the following 391-residue polypeptide: Tumor susceptibility gene 101 protein (391 aa).

At A2 the chain carries N-acetylalanine. One can recognise a UEV domain in the interval 2 to 145 (AVSESQLKKM…GEEPPVFSRP (144 aa)). An interaction with CEP55 region spans residues 159 to 163 (PPNTS). Residues 197–220 (YPATTSSQYPSQPPVTTVGPSRDG) are disordered. Residues 200 to 215 (TTSSQYPSQPPVTTVG) are compositionally biased toward polar residues. T221 is subject to Phosphothreonine. Positions 237–317 (DKLRWRMKEE…NQSENNDIDE (81 aa)) form a coiled coil. The PTAP/PSAP motif signature appears at 321–324 (PTAP). Positions 323 to 391 (APLYKQILNL…RKTAGLSDLY (69 aa)) constitute an SB domain.

This sequence belongs to the ubiquitin-conjugating enzyme family. UEV subfamily. As to quaternary structure, component of the ESCRT-I complex (endosomal sorting complex required for transport I) which consists of TSG101, VPS28, a VPS37 protein (VPS37A to -D) and MVB12A or MVB12B in a 1:1:1:1 stoichiometry. Interacts with VPS37A, VPS37B and VPS37C. Component of an ESCRT-I complex (endosomal sorting complex required for transport I) which consists of TSG101, VPS28, VPS37A and UBAP1 in a 1:1:1:1 stoichiometry. Interacts with DMAP1. Interacts with GMCL. Interacts with ubiquitin, stathmin and AATF. Interacts with HGS; the interaction mediates the association with the ESCRT-0 complex. Interacts with GGA1 and GGA3. Interacts (via UEV domain) with PDCD6IP/AIP1. Interacts with VPS28, SNF8 and VPS36. Self-associates. Interacts with MVB12A; the association appears to be mediated by the TSG101-VPS37 binary subcomplex. Interacts with VPS37D. Interacts with LRSAM1. Interacts with CEP55; the interaction is required for cytokinesis. Interacts with PDCD6. Interacts with LITAF. Interacts with murine leukemia virus Gag polyprotein (via PSAP motif). Interacts with MGRN1. Interacts with ARRDC1; recruits TSG101 to the plasma membrane. In terms of processing, monoubiquitinated at multiple sites by LRSAM1 and by MGRN1. Ubiquitination inactivates it, possibly by regulating its shuttling between an active membrane-bound protein and an inactive soluble form. Ubiquitination by MGRN1 requires the presence of UBE2D1. As to expression, ubiquitous. Higher expression in brain and mammary gland. Lower expression in liver and tumoral tissues.

The protein localises to the cytoplasm. It localises to the early endosome membrane. It is found in the late endosome membrane. Its subcellular location is the cytoskeleton. The protein resides in the microtubule organizing center. The protein localises to the centrosome. It localises to the midbody. It is found in the midbody ring. Its subcellular location is the nucleus. Component of the ESCRT-I complex, a regulator of vesicular trafficking process. Binds to ubiquitinated cargo proteins and is required for the sorting of endocytic ubiquitinated cargos into multivesicular bodies (MVBs). Mediates the association between the ESCRT-0 and ESCRT-I complex. Required for completion of cytokinesis; the function requires CEP55. May be involved in cell growth and differentiation. Acts as a negative growth regulator. Required for the exosomal release of SDCBP, CD63 and syndecan. It may also play a role in the extracellular release of microvesicles that differ from the exosomes. This Mus musculus (Mouse) protein is Tumor susceptibility gene 101 protein (Tsg101).